The primary structure comprises 185 residues: Elongation factor P (185 aa).

This sequence belongs to the elongation factor P family.

The protein resides in the cytoplasm. The protein operates within protein biosynthesis; polypeptide chain elongation. In terms of biological role, involved in peptide bond synthesis. Stimulates efficient translation and peptide-bond synthesis on native or reconstituted 70S ribosomes in vitro. Probably functions indirectly by altering the affinity of the ribosome for aminoacyl-tRNA, thus increasing their reactivity as acceptors for peptidyl transferase. The sequence is that of Elongation factor P from Staphylococcus saprophyticus subsp. saprophyticus (strain ATCC 15305 / DSM 20229 / NCIMB 8711 / NCTC 7292 / S-41).